The primary structure comprises 178 residues: Ribonuclease M5 (178 aa).

Positions 10–94 (DGVIVCEGKT…YVDMNARLKN (85 aa)) constitute a Toprim domain. Mg(2+)-binding residues include Glu-16, Asp-62, and Asp-64.

Belongs to the ribonuclease M5 family. Mg(2+) serves as cofactor.

It localises to the cytoplasm. It carries out the reaction Endonucleolytic cleavage of RNA, removing 21 and 42 nucleotides, respectively, from the 5'- and 3'-termini of a 5S-rRNA precursor.. Functionally, required for correct processing of both the 5' and 3' ends of 5S rRNA precursor. Cleaves both sides of a double-stranded region yielding mature 5S rRNA in one step. This chain is Ribonuclease M5 (rnmV), found in Mycoplasma genitalium (strain ATCC 33530 / DSM 19775 / NCTC 10195 / G37) (Mycoplasmoides genitalium).